Here is a 581-residue protein sequence, read N- to C-terminus: MANAPHGGVLKDLLVRDAALHDSLLEEARSLNDIFLTERQLCDLELILNGGFSPLEGFMDEQDYTSVVETLRLAPFNGHKYGHVFPIPITLDVSQEDINTLGLKQGARVALRDPRDDAALAILTVSDIYRPNKATEAEKVMGADDIAHPSVAYLRNNVKEFYVGGKVQAIQAPTHFDYVPLRYTPAELRAHFHKLAWRKVVAFQTRNPMHRAHRELTVRAARQRRANVLIHPVVGLTKPGDVDHYTRVRAYQALMPSYPEGMAHLALLPLAMRMAGPREAVWHAVIRKNFGATHFIVGRDHAGPGKNSQGKDFYGPYDAQELVTQFKDELQIEMVPFQAMTYLPGSDEYQPVDEVPKGTPTADISGTELRKRLRTGASIPDWFSYTGVVKVLRESYPPRPQQGFTILLTGLHNSGKDTIARALQVTLQQQGSRSVSLLLGEELRSDLDPQIGRAITPEQKHINLERIGFVAAELTKAGAAVIAAPTAPYERSRQAFKKQVVGSGGGNYFLVHVATPLEWCEKVDRRGLYKAARAGEIKNLTGVDDVYEAPENADLVCDLRIDTVPEIVHSIIMILESQNLV.

The tract at residues 1–176 (MANAPHGGVL…VQAIQAPTHF (176 aa)) is N-terminal. Residues 177–401 (DYVPLRYTPA…LRESYPPRPQ (225 aa)) form a catalytic region. Residue glutamine 204 participates in sulfate binding. ATP-binding positions include 204–207 (QTRN) and 298–301 (GRDH). Residues threonine 205, arginine 206, and asparagine 207 contribute to the active site. Arginine 206 provides a ligand contact to sulfate. Residue alanine 302 coordinates sulfate. Methionine 340 is a binding site for ATP. The allosteric regulation domain; adenylyl-sulfate kinase-like stretch occupies residues 402-581 (QGFTILLTGL…IMILESQNLV (180 aa)). 3'-phosphoadenylyl sulfate contacts are provided by residues 441-444 (EELR), 486-487 (TA), and arginine 526.

This sequence in the N-terminal section; belongs to the sulfate adenylyltransferase family. It in the C-terminal section; belongs to the APS kinase family. Homohexamer. Dimer of trimers.

The protein localises to the cytoplasm. The enzyme catalyses sulfate + ATP + H(+) = adenosine 5'-phosphosulfate + diphosphate. It participates in sulfur metabolism; hydrogen sulfide biosynthesis; sulfite from sulfate: step 1/3. Its activity is regulated as follows. Allosterically inhibited by 3'-phosphoadenosine 5'-phosphosulfate (PAPS). In terms of biological role, catalyzes the first intracellular reaction of sulfate assimilation, forming adenosine-5'-phosphosulfate (APS) from inorganic sulfate and ATP. Plays an important role in sulfate activation as a component of the biosynthesis pathway of sulfur-containing amino acids. The sequence is that of Sulfate adenylyltransferase from Cryptococcus neoformans var. grubii serotype A (strain H99 / ATCC 208821 / CBS 10515 / FGSC 9487) (Filobasidiella neoformans var. grubii).